Reading from the N-terminus, the 444-residue chain is Spermatogenesis-associated protein 1 (444 aa).

A compositionally biased stretch (basic and acidic residues) spans G145–P160. Residues G145–T229 form a disordered region. Residues S268–L403 adopt a coiled-coil conformation.

Interacts with IFT20.

It localises to the cytoplasmic vesicle. Its subcellular location is the secretory vesicle. It is found in the acrosome. The chain is Spermatogenesis-associated protein 1 (Spata1) from Rattus norvegicus (Rat).